A 166-amino-acid polypeptide reads, in one-letter code: NADH-ubiquinone oxidoreductase chain 6 (166 aa).

A run of 5 helical transmembrane segments spans residues 1–21 (MMYF…AFAS), 26–46 (IYGG…IVSL), 47–67 (GGSF…LVVF), 86–106 (TVVL…YEFF), and 139–159 (CGGW…FVVL).

Belongs to the complex I subunit 6 family. Core subunit of respiratory chain NADH dehydrogenase (Complex I) which is composed of 45 different subunits.

The protein resides in the mitochondrion inner membrane. It catalyses the reaction a ubiquinone + NADH + 5 H(+)(in) = a ubiquinol + NAD(+) + 4 H(+)(out). Its function is as follows. Core subunit of the mitochondrial membrane respiratory chain NADH dehydrogenase (Complex I) which catalyzes electron transfer from NADH through the respiratory chain, using ubiquinone as an electron acceptor. Essential for the catalytic activity and assembly of complex I. This chain is NADH-ubiquinone oxidoreductase chain 6 (MT-ND6), found in Tachyglossus aculeatus aculeatus (Southeast Australian short-beaked echidna).